We begin with the raw amino-acid sequence, 82 residues long: Large ribosomal subunit protein eL14 (82 aa).

The protein belongs to the eukaryotic ribosomal protein eL14 family.

The polypeptide is Large ribosomal subunit protein eL14 (Pyrococcus abyssi (strain GE5 / Orsay)).